The sequence spans 476 residues: Sulfate adenylyltransferase subunit 1 (476 aa).

Positions 24 to 241 (KSLLRFLTCG…EDVDFVQEQE (218 aa)) constitute a tr-type G domain. A G1 region spans residues 33-40 (GSVDDGKS). 33–40 (GSVDDGKS) is a GTP binding site. The segment at 91–95 (GITID) is G2. Residues 112 to 115 (DTPG) form a G3 region. Residues 112–116 (DTPGH) and 167–170 (NKMD) each bind GTP. Residues 167 to 170 (NKMD) are G4. Residues 205–207 (SAL) form a G5 region.

It belongs to the TRAFAC class translation factor GTPase superfamily. Classic translation factor GTPase family. CysN/NodQ subfamily. As to quaternary structure, heterodimer composed of CysD, the smaller subunit, and CysN.

It carries out the reaction sulfate + ATP + H(+) = adenosine 5'-phosphosulfate + diphosphate. It participates in sulfur metabolism; hydrogen sulfide biosynthesis; sulfite from sulfate: step 1/3. Functionally, with CysD forms the ATP sulfurylase (ATPS) that catalyzes the adenylation of sulfate producing adenosine 5'-phosphosulfate (APS) and diphosphate, the first enzymatic step in sulfur assimilation pathway. APS synthesis involves the formation of a high-energy phosphoric-sulfuric acid anhydride bond driven by GTP hydrolysis by CysN coupled to ATP hydrolysis by CysD. This Photobacterium profundum (strain SS9) protein is Sulfate adenylyltransferase subunit 1.